Consider the following 183-residue polypeptide: Mid1-interacting protein 1 (183 aa).

At M1 the chain carries N-acetylmethionine. Residues S75 and S79 each carry the phosphoserine modification.

It belongs to the SPOT14 family. Homodimer in the absence of THRSP. Heterodimer with THRSP. The homodimer interacts with ACACA and ACACB. Promotes polymerization of Acetyl-CoA carboxylase to form complexes that contain MID1IP1 and ACACA and/or ACACB. Interaction with THRSP interferes with ACACA binding.

It localises to the nucleus. The protein resides in the cytoplasm. It is found in the cytoskeleton. Its function is as follows. Plays a role in the regulation of lipogenesis in liver. Up-regulates ACACA enzyme activity. Required for efficient lipid biosynthesis, including triacylglycerol, diacylglycerol and phospholipid. Involved in stabilization of microtubules. In Homo sapiens (Human), this protein is Mid1-interacting protein 1 (MID1IP1).